The following is a 245-amino-acid chain: Biosynthetic peptidoglycan transglycosylase (245 aa).

Residues L24–F44 form a helical membrane-spanning segment.

This sequence belongs to the glycosyltransferase 51 family.

The protein localises to the cell inner membrane. The catalysed reaction is [GlcNAc-(1-&gt;4)-Mur2Ac(oyl-L-Ala-gamma-D-Glu-L-Lys-D-Ala-D-Ala)](n)-di-trans,octa-cis-undecaprenyl diphosphate + beta-D-GlcNAc-(1-&gt;4)-Mur2Ac(oyl-L-Ala-gamma-D-Glu-L-Lys-D-Ala-D-Ala)-di-trans,octa-cis-undecaprenyl diphosphate = [GlcNAc-(1-&gt;4)-Mur2Ac(oyl-L-Ala-gamma-D-Glu-L-Lys-D-Ala-D-Ala)](n+1)-di-trans,octa-cis-undecaprenyl diphosphate + di-trans,octa-cis-undecaprenyl diphosphate + H(+). It participates in cell wall biogenesis; peptidoglycan biosynthesis. In terms of biological role, peptidoglycan polymerase that catalyzes glycan chain elongation from lipid-linked precursors. The polypeptide is Biosynthetic peptidoglycan transglycosylase (Pectobacterium atrosepticum (strain SCRI 1043 / ATCC BAA-672) (Erwinia carotovora subsp. atroseptica)).